A 196-amino-acid chain; its full sequence is Lipoprotein signal peptidase (196 aa).

Residues 1 to 24 (MAEAERIIGMPENPDVDGTDEGGS) form a disordered region. Transmembrane regions (helical) follow at residues 40 to 60 (ILAL…SKML), 92 to 112 (IGEA…VVIF), and 118 to 138 (LYSL…LGNL). Catalysis depends on residues Asp155 and Asp169. A helical membrane pass occupies residues 164-184 (VFNLADSAIVCGGILIVILSF).

This sequence belongs to the peptidase A8 family.

It localises to the cell membrane. It catalyses the reaction Release of signal peptides from bacterial membrane prolipoproteins. Hydrolyzes -Xaa-Yaa-Zaa-|-(S,diacylglyceryl)Cys-, in which Xaa is hydrophobic (preferably Leu), and Yaa (Ala or Ser) and Zaa (Gly or Ala) have small, neutral side chains.. The protein operates within protein modification; lipoprotein biosynthesis (signal peptide cleavage). Functionally, this protein specifically catalyzes the removal of signal peptides from prolipoproteins. This chain is Lipoprotein signal peptidase, found in Streptomyces griseus subsp. griseus (strain JCM 4626 / CBS 651.72 / NBRC 13350 / KCC S-0626 / ISP 5235).